We begin with the raw amino-acid sequence, 173 residues long: MRILSSLKTFSQSRLSWLLLLAFVVFFTLCAMYFQHVMLLAPCVMCIYERIAMLGIGVAALIGAIAPQNPVVRWLGFAAWGASSYKGLMLAIEHVNYQFNPSPFATCDLFVTFPAWAPLNQWAPNLFEAYGDCSKVVWQFLTLSMPQWLVVIFAANLLALAIFVVAQLAKTSR.

The Cytoplasmic segment spans residues 1 to 16 (MRILSSLKTFSQSRLS). The chain crosses the membrane as a helical span at residues 17-33 (WLLLLAFVVFFTLCAMY). The Periplasmic segment spans residues 34-51 (FQHVMLLAPCVMCIYERI). Residues cysteine 43 and cysteine 46 are joined by a disulfide bond. Residues 52 to 67 (AMLGIGVAALIGAIAP) form a helical membrane-spanning segment. The Cytoplasmic segment spans residues 68–74 (QNPVVRW). A helical transmembrane segment spans residues 75–92 (LGFAAWGASSYKGLMLAI). The Periplasmic segment spans residues 93-147 (EHVNYQFNPSPFATCDLFVTFPAWAPLNQWAPNLFEAYGDCSKVVWQFLTLSMPQ). A disulfide bridge links cysteine 107 with cysteine 133. Residues 148 to 166 (WLVVIFAANLLALAIFVVA) traverse the membrane as a helical segment. Over 167 to 173 (QLAKTSR) the chain is Cytoplasmic.

The protein belongs to the DsbB family.

It localises to the cell inner membrane. Its function is as follows. Required for disulfide bond formation in some periplasmic proteins. Acts by oxidizing the DsbA protein. This Vibrio cholerae serotype O1 (strain ATCC 39315 / El Tor Inaba N16961) protein is Disulfide bond formation protein B.